A 586-amino-acid chain; its full sequence is Aspartate--tRNA ligase (586 aa).

Position 171 (E171) interacts with L-aspartate. Residues 195–198 are aspartate; sequence QLFK. R217 serves as a coordination point for L-aspartate. ATP is bound by residues 217-219 and Q226; that span reads RDE. L-aspartate is bound at residue H448. E482 is a binding site for ATP. R489 contributes to the L-aspartate binding site. Residue 534–537 participates in ATP binding; sequence GLDR.

This sequence belongs to the class-II aminoacyl-tRNA synthetase family. Type 1 subfamily. Homodimer.

The protein resides in the cytoplasm. The enzyme catalyses tRNA(Asp) + L-aspartate + ATP = L-aspartyl-tRNA(Asp) + AMP + diphosphate. Catalyzes the attachment of L-aspartate to tRNA(Asp) in a two-step reaction: L-aspartate is first activated by ATP to form Asp-AMP and then transferred to the acceptor end of tRNA(Asp). This Buchnera aphidicola subsp. Acyrthosiphon pisum (strain APS) (Acyrthosiphon pisum symbiotic bacterium) protein is Aspartate--tRNA ligase.